We begin with the raw amino-acid sequence, 234 residues long: Ras-related protein Rab-20 (234 aa).

Residues Gly17, Lys18, Thr19, Asp32, and Thr36 each contribute to the GTP site. Thr19 serves as a coordination point for Mg(2+). 2 short sequence motifs (switch) span residues 28 to 41 (RRFPDTVSTVGGAF) and 55 to 72 (DTAGREQFHGLGSMYCRG). Residues Thr36 and Asp55 each coordinate Mg(2+). GTP is bound by residues Gly58, Asn113, Lys114, and Asp116. The disordered stretch occupies residues 125-144 (GQEKEECSPNMDAGDRVSPR). Residues 126 to 142 (QEKEECSPNMDAGDRVS) show a composition bias toward basic and acidic residues. Ala184 and Lys185 together coordinate GTP. Residues 212–234 (RPSHTVDISSHKPPKRTRSGCCA) form a disordered region. The segment covering 223 to 234 (KPPKRTRSGCCA) has biased composition (basic residues). 2 S-geranylgeranyl cysteine lipidation sites follow: Cys232 and Cys233.

Belongs to the small GTPase superfamily. Rab family. The cofactor is Mg(2+). Low or absent expression in normal pancreas and stronger expression in 15 of 18 exocrine pancreatic adenocarcinomas (at protein level).

It localises to the golgi apparatus. Its subcellular location is the cytoplasmic vesicle. The protein resides in the phagosome. It is found in the phagosome membrane. It carries out the reaction GTP + H2O = GDP + phosphate + H(+). Regulated by guanine nucleotide exchange factors (GEFs) which promote the exchange of bound GDP for free GTP. Regulated by GTPase activating proteins (GAPs) which increase the GTP hydrolysis activity. Inhibited by GDP dissociation inhibitors (GDIs). The small GTPases Rab are key regulators of intracellular membrane trafficking, from the formation of transport vesicles to their fusion with membranes. Rabs cycle between an inactive GDP-bound form and an active GTP-bound form that is able to recruit to membranes different sets of downstream effectors directly responsible for vesicle formation, movement, tethering and fusion. RAB20 plays a role in apical endocytosis/recycling. Plays a role in the maturation and acidification of phagosomes that engulf pathogens, such as S.aureus and M.tuberculosis. Plays a role in the fusion of phagosomes with lysosomes. This is Ras-related protein Rab-20 from Homo sapiens (Human).